The following is a 447-amino-acid chain: Multicopper oxidase mco (447 aa).

Over residues 1–25 (MMDMKENDQKRNDMMDMKSHDERKN) the composition is skewed to basic and acidic residues. The disordered stretch occupies residues 1-43 (MMDMKENDQKRNDMMDMKSHDERKNLNSSQGKNEITFPKVLDP). The Cu cation site is built by His107, His109, His147, His149, His375, His378, His380, His428, Cys429, His430, His434, and Met439.

It belongs to the multicopper oxidase family. Requires Cu cation as cofactor.

It is found in the cytoplasm. Functionally, may be involved in copper homeostasis and oxidative stress response. Oxidizes the substrate 3,3'-dimethoxybenzidine in vitro. Also possesses low levels of phenoloxidase and ferroxidase activities. The polypeptide is Multicopper oxidase mco (mco) (Staphylococcus aureus).